A 319-amino-acid polypeptide reads, in one-letter code: MSTSNGTIVEIELPCKLSTCDANLLQRCEGRVLFLPFVRARVLLKDVDYKSFYIAGTEPDTLSLLSTFKTRFAAVITRALPGRMSAVVLGMGSIPNGLALQNTGPFDLCNGDTVCLMPPIFPNVCCRIRLESIDTELLFPVTVPTRLANEILAKTLSRAIEAIGRGQMPPPTSRESETIMYNGRSYTISPTLHSLDAAESTVRTLLLNMIFAINEGNMILYTMIPTLLTLGASDGYINALVGLETATRAVGQLIRIPNPPPLQDAWRRYPVYEALSAWITMTLNLGNVLSLHPLLKVCTFDGPANIKAGDLCPVIANWY.

It belongs to the herpesviridae TRX2 protein family. As to quaternary structure, interacts with TRX1 and major capisd protein/MCP.

It localises to the virion. It is found in the host nucleus. Functionally, structural component of the T=16 icosahedral capsid. The capsid is composed of pentamers and hexamers of major capsid protein/MCP, which are linked together by heterotrimers called triplexes. These triplexes are formed by a single molecule of triplex protein 1/TRX1 and two copies of triplex protein 2/TRX2. Additionally, TRX1 is required for efficient transport of TRX2 to the nucleus, which is the site of capsid assembly. This chain is Triplex capsid protein 2, found in Gallid herpesvirus 2 (strain Chicken/Md5/ATCC VR-987) (GaHV-2).